Consider the following 339-residue polypeptide: MVLVQESLILGIETSCDETAAAIVRNGKEILSNIVNSQIDIHQQFGGVVPEVASRKHIENIAGVVHRAFSEAQLAYSAIDAVAVTNRPGLVGALLVGVSFAKAFAYALEKPLIAVNHLHGHIYANFLEHRDIEFPAICLVVSGGHTSLLLMSNPNKMEVLGETRDDAAGEAFDKVARFLGLGYPGGPAIQEAATKGKAGQLQLPRVFLDRNDFEFSFSGLKTAAMNQWNKLQRRGQANVFDMAAEFQAALVEVLVEKSIKAAAKYQVRTIMMAGGVAANQELRNLMKKRTKEAGLKLFYPSLKLCTDNAAMVAANAHYHYGNRSFAPLSLNAYPSLLSL.

Residues His117 and His121 each contribute to the Fe cation site. Substrate is bound by residues 140-144 (VVSGG), Asp173, Gly186, and Asn279. Asp307 contributes to the Fe cation binding site.

It belongs to the KAE1 / TsaD family. Fe(2+) is required as a cofactor.

It localises to the cytoplasm. It catalyses the reaction L-threonylcarbamoyladenylate + adenosine(37) in tRNA = N(6)-L-threonylcarbamoyladenosine(37) in tRNA + AMP + H(+). Its function is as follows. Required for the formation of a threonylcarbamoyl group on adenosine at position 37 (t(6)A37) in tRNAs that read codons beginning with adenine. Is involved in the transfer of the threonylcarbamoyl moiety of threonylcarbamoyl-AMP (TC-AMP) to the N6 group of A37, together with TsaE and TsaB. TsaD likely plays a direct catalytic role in this reaction. This chain is tRNA N6-adenosine threonylcarbamoyltransferase, found in Syntrophomonas wolfei subsp. wolfei (strain DSM 2245B / Goettingen).